The chain runs to 561 residues: Carbohydrate sulfotransferase 15 (561 aa).

Residues 1-80 (MRHCINCCIQ…FLRFKKGKRC (80 aa)) lie on the Cytoplasmic side of the membrane. A helical; Signal-anchor for type II membrane protein membrane pass occupies residues 81 to 101 (SLVFGLIIMTLVMASYILSGA). Residues 102–561 (HQELLISSPF…ADEAFAWKTT (460 aa)) are Lumenal-facing. Residue 263–267 (KCGTT) coordinates 3'-phosphoadenylyl sulfate. An N-linked (GlcNAc...) asparagine glycan is attached at Asn-364. Residues Arg-392 and Ser-400 each contribute to the 3'-phosphoadenylyl sulfate site.

This sequence belongs to the sulfotransferase 1 family. As to quaternary structure, homodimer; disulfide-linked (Potential). The relevance of homodimerization is however unsure. May interact with phosphorylated proteins in resting B-cells, including HCK. A divalent metal cation is required as a cofactor. Requires glutathione as cofactor. Glycosylated. Expressed in B-cell-enriched tissues but not in fetal or adult thymus. Expressed in fetal and adult spleen, lymph node, tonsil, bone marrow and peripheral leukocytes. Not expressed in T-cells. In pro-B, pre-B, and mature B-cell lines, it colocalizes with RAG1.

It localises to the golgi apparatus membrane. It carries out the reaction dermatan 4'-sulfate + n 3'-phosphoadenylyl sulfate = dermatan 4',6'-bissulfate + n adenosine 3',5'-bisphosphate + n H(+). The catalysed reaction is chondroitin 4'-sulfate + n 3'-phosphoadenylyl sulfate = chondroitin 4',6'-bissulfate + n adenosine 3',5'-bisphosphate + n H(+). Its activity is regulated as follows. Inhibited by phenyl beta-GalNAc(4,6-SO(4)). In terms of biological role, sulfotransferase that transfers sulfate from 3'-phosphoadenosine 5'-phosphosulfate (PAPS) to the C-6 hydroxyl group of the GalNAc 4-sulfate residue of chondroitin sulfate A and forms chondroitin sulfate E containing GlcA-GalNAc(4,6-SO(4)) repeating units. It also transfers sulfate to a unique non-reducing terminal sequence, GalNAc(4SO4)-GlcA(2SO4)-GalNAc(6SO4), to yield a highly sulfated structure similar to the structure found in thrombomodulin chondroitin sulfate. May also act as a B-cell receptor involved in BCR ligation-mediated early activation that mediate regulatory signals key to B-cell development and/or regulation of B-cell-specific RAG expression; however such results are unclear in vivo. The polypeptide is Carbohydrate sulfotransferase 15 (CHST15) (Homo sapiens (Human)).